Reading from the N-terminus, the 89-residue chain is Abortive infection protein (89 aa).

Its subcellular location is the cell membrane. In terms of biological role, ABI may interact with a target in the cell membrane, which could be the product of the host's cmrA gene, and cause disruption of the cellular membrane such that lysis of the infected cell and death of the infecting phage would result. The polypeptide is Abortive infection protein (abi) (Escherichia coli).